A 403-amino-acid polypeptide reads, in one-letter code: Probable tRNA sulfurtransferase (403 aa).

Residues 60–165 enclose the THUMP domain; sequence QLAEERLKPI…KEGVFLSCRT (106 aa). ATP-binding positions include 183-184, 208-209, arginine 265, glycine 287, and glutamine 296; these read ML and HF.

The protein belongs to the ThiI family.

Its subcellular location is the cytoplasm. The catalysed reaction is [ThiI sulfur-carrier protein]-S-sulfanyl-L-cysteine + a uridine in tRNA + 2 reduced [2Fe-2S]-[ferredoxin] + ATP + H(+) = [ThiI sulfur-carrier protein]-L-cysteine + a 4-thiouridine in tRNA + 2 oxidized [2Fe-2S]-[ferredoxin] + AMP + diphosphate. The enzyme catalyses [ThiS sulfur-carrier protein]-C-terminal Gly-Gly-AMP + S-sulfanyl-L-cysteinyl-[cysteine desulfurase] + AH2 = [ThiS sulfur-carrier protein]-C-terminal-Gly-aminoethanethioate + L-cysteinyl-[cysteine desulfurase] + A + AMP + 2 H(+). It participates in cofactor biosynthesis; thiamine diphosphate biosynthesis. Its function is as follows. Catalyzes the ATP-dependent transfer of a sulfur to tRNA to produce 4-thiouridine in position 8 of tRNAs, which functions as a near-UV photosensor. Also catalyzes the transfer of sulfur to the sulfur carrier protein ThiS, forming ThiS-thiocarboxylate. This is a step in the synthesis of thiazole, in the thiamine biosynthesis pathway. The sulfur is donated as persulfide by IscS. The protein is Probable tRNA sulfurtransferase of Listeria monocytogenes serotype 4a (strain HCC23).